The sequence spans 496 residues: Glycine receptor subunit beta (496 aa).

Residues 1–22 (MKFSLAISFFILMSLLFEDACA) form the signal peptide. Over 23–268 (KEKSSKKGKG…IFTLRRQVGF (246 aa)) the chain is Extracellular. The interval 32 to 53 (GKKKQYLCPSQQSPEDLARVPP) is disordered. N-linked (GlcNAc...) asparagine glycosylation is present at Asn54. Residues Arg108 and Ser174 each contribute to the glycine site. A disulfide bridge connects residues Cys183 and Cys197. N-linked (GlcNAc...) asparagine glycosylation is present at Asn242. A disulfide bridge connects residues Cys243 and Cys255. Thr250 contacts glycine. A helical transmembrane segment spans residues 269-289 (YMMGVYAPTLLIVVLSWLSFW). Topologically, residues 290 to 294 (INPDA) are cytoplasmic. The chain crosses the membrane as a helical span at residues 295–315 (SAARVPLGIFSVLSLASECTT). Residues 316–327 (LAAELPKVSYVK) lie on the Extracellular side of the membrane. The helical transmembrane segment at 328–349 (ALDVWLIACLLFGFASLVEYAV) threads the bilayer. Residues 350 to 471 (VQVMLNNPKR…KPVIPTAAKR (122 aa)) lie on the Cytoplasmic side of the membrane. Thr391 is subject to Phosphothreonine. The helical transmembrane segment at 472 to 495 (IDLYARALFPFCFLFFNVIYWSIY) threads the bilayer. Residue Leu496 is a topological domain, extracellular.

It belongs to the ligand-gated ion channel (TC 1.A.9) family. Glycine receptor (TC 1.A.9.3) subfamily. GLRB sub-subfamily. In terms of assembly, forms heteropentamers with glycin receptor alpha subunits. Heteropentamers with GLRA1 can be composed of two GLRA1 and three GLRB subunits, or three GLRA1 and two GLRB subunits, or four GLRA1 subunits and one GLRB subunit. Forms heteropentamers with GLRA2. Functional GLRB-GLRA2 heteropentamers contain four GLRA2 subunits and one GLRB subunit, although alternative subunit composition cannot be excluded. Forms a heteropentamer with GLRA3. Interacts with GPHN. As to expression, detected in spinal cord, brain and brain stem, especially in the periolivary region, spinal nuclei, trigeminal nucleus, medulla oblongata, pons and midbrain. Detected in the inner plexiform layer of the retina (at protein level). High levels of expression in cortex, hippocampus, thalamus and cerebellum. Detected in spinal cord.

It is found in the postsynaptic cell membrane. The protein localises to the synapse. It localises to the cell projection. The protein resides in the dendrite. Its subcellular location is the cell membrane. It is found in the cytoplasm. It catalyses the reaction chloride(in) = chloride(out). With respect to regulation, channel opening is triggered by extracellular glycine. Heteropentameric channels composed of GLRB and GLRA1 are activated by lower glycine levels than homopentameric GLRA1. Subunit of heteromeric glycine-gated chloride channels. Plays an important role in the down-regulation of neuronal excitability. Contributes to the generation of inhibitory postsynaptic currents. This Mus musculus (Mouse) protein is Glycine receptor subunit beta (Glrb).